The following is a 184-amino-acid chain: GTP-dependent dephospho-CoA kinase (184 aa).

GTP-binding residues include Asp-33, Val-34, Asp-52, Lys-54, and Glu-103.

The protein belongs to the GTP-dependent DPCK family.

It carries out the reaction 3'-dephospho-CoA + GTP = GDP + CoA + H(+). It participates in cofactor biosynthesis; coenzyme A biosynthesis. Its function is as follows. Catalyzes the GTP-dependent phosphorylation of the 3'-hydroxyl group of dephosphocoenzyme A to form coenzyme A (CoA). The protein is GTP-dependent dephospho-CoA kinase of Ignicoccus hospitalis (strain KIN4/I / DSM 18386 / JCM 14125).